The sequence spans 701 residues: Larval serum protein 2 (701 aa).

The signal sequence occupies residues 1–21 (MKSFTVIALAAVALLATLGQA). N-linked (GlcNAc...) asparagine glycosylation is present at N204.

This sequence belongs to the hemocyanin family. Homohexamer.

It is found in the secreted. The protein localises to the extracellular space. Functionally, larval storage protein (LSP) which may serve as a store of amino acids for synthesis of adult proteins. In Drosophila melanogaster (Fruit fly), this protein is Larval serum protein 2 (Lsp2).